The primary structure comprises 196 residues: SPRY domain-containing protein 7 (196 aa).

A2 carries the N-acetylalanine modification. The B30.2/SPRY domain maps to A2–P184.

The polypeptide is SPRY domain-containing protein 7 (SPRYD7) (Bos taurus (Bovine)).